The chain runs to 587 residues: MSRARSHLRAALFLAAASARGITTQVAARRGLSAWPVPQEPSMEYQDAVRMLNTLQTNAGYLEQVKRQRGDPQTQLEAMELYLARSGLQVEDLDRLNIIHVTGTKGKGSTCAFTECILRSYGLKTGFFSSPHLVQVRERIRINGQPISPELFTKYFWRLYHRLEETKDGSCVSMPPYFRFLTLMAFHVFLQEKVDLAVVEVGIGGAYDCTNIIRKPVVCGVSSLGIDHTSLLGDTVEKIAWQKGGIFKQGVPAFTVLQPEGPLAVLRDRAQQISCPLYLCPMLEALEEGGPPLTLGLEGEHQRSNAALALQLAHCWLQRQDRHGAGEPKASRPGLLWQLPLAPVFQPTSHMRLGLRNTEWPGRTQVLRRGPLTWYLDGAHTASSAQACVRWFRQALQGRERPSGGPEVRVLLFNATGDRDPAALLKLLQPCQFDYAVFCPNLTEVSSTGNADQQNFTVTLDQVLLRCLEHQQHWNHLDEEQASPDLWSAPSPEPGGSASLLLAPHPPHTCSASSLVFSCISHALQWISQGRDPIFQPPSPPKGLLTHPVAHSGASILREAAAIHVLVTGSLHLVGGVLKLLEPALSQ.

A mitochondrion-targeting transit peptide spans 1–42; sequence MSRARSHLRAALFLAAASARGITTQVAARRGLSAWPVPQEPS. Position 43 is an N-acetylmethionine (Met-43). 106 to 109 is a binding site for ATP; it reads GKGS. Ser-130, Glu-200, and His-228 together coordinate Mg(2+). Residues Arg-363 and Asp-377 each coordinate ATP. Ser-539 bears the Phosphoserine mark.

It belongs to the folylpolyglutamate synthase family. Monomer. Requires K(+) as cofactor. The cofactor is NH4(+).

Its subcellular location is the mitochondrion inner membrane. The protein resides in the mitochondrion matrix. It localises to the cytoplasm. The catalysed reaction is (6S)-5,6,7,8-tetrahydrofolyl-(gamma-L-Glu)(n) + L-glutamate + ATP = (6S)-5,6,7,8-tetrahydrofolyl-(gamma-L-Glu)(n+1) + ADP + phosphate + H(+). The protein operates within cofactor biosynthesis; tetrahydrofolylpolyglutamate biosynthesis. With respect to regulation, activated by 10 mM sodium bicarbonate. Catalyzes conversion of folates to polyglutamate derivatives allowing concentration of folate compounds in the cell and the intracellular retention of these cofactors, which are important substrates for most of the folate-dependent enzymes that are involved in one-carbon transfer reactions involved in purine, pyrimidine and amino acid synthesis. Unsubstituted reduced folates are the preferred substrates. Metabolizes methotrexate (MTX) to polyglutamates. The chain is Folylpolyglutamate synthase, mitochondrial (FPGS) from Homo sapiens (Human).